The chain runs to 42 residues: MQDFTKYLSTAPVLSALWFAILAGLLIEINRFFPDALLFPFG.

The chain crosses the membrane as a helical span at residues 7–27 (YLSTAPVLSALWFAILAGLLI).

Belongs to the PsaJ family.

Its subcellular location is the plastid. It localises to the chloroplast thylakoid membrane. Functionally, may help in the organization of the PsaE and PsaF subunits. This chain is Photosystem I reaction center subunit IX, found in Chlorokybus atmophyticus (Soil alga).